Reading from the N-terminus, the 133-residue chain is MANTDPISDMLTRIRNACEKRHQTTNIPLSRMNRSIAKVLEQEGFIDQFSEAGEGVQKHLVLSLKYSGKQKVPTIRSVQRVSKPGLRIYTNRRDLPKVLGGLGVAIISTSKGVMSDRDARKEGVGGEVLCYVY.

The protein belongs to the universal ribosomal protein uS8 family. As to quaternary structure, part of the 30S ribosomal subunit. Contacts proteins S5 and S12.

One of the primary rRNA binding proteins, it binds directly to 16S rRNA central domain where it helps coordinate assembly of the platform of the 30S subunit. This chain is Small ribosomal subunit protein uS8, found in Synechococcus sp. (strain RCC307).